The chain runs to 384 residues: tRNA-specific 2-thiouridylase MnmA (384 aa).

Residues 9–16 and Met35 contribute to the ATP site; that span reads GMSGGVDS. Positions 95–97 are interaction with target base in tRNA; it reads NPD. Residue Cys100 is the Nucleophile of the active site. Cys100 and Cys196 are disulfide-bonded. Gly124 contacts ATP. Residues 146 to 148 form an interaction with tRNA region; sequence KDQ. Residue Cys196 is the Cysteine persulfide intermediate of the active site. The tract at residues 308 to 309 is interaction with tRNA; the sequence is RY.

The protein belongs to the MnmA/TRMU family.

The protein localises to the cytoplasm. The catalysed reaction is S-sulfanyl-L-cysteinyl-[protein] + uridine(34) in tRNA + AH2 + ATP = 2-thiouridine(34) in tRNA + L-cysteinyl-[protein] + A + AMP + diphosphate + H(+). In terms of biological role, catalyzes the 2-thiolation of uridine at the wobble position (U34) of tRNA, leading to the formation of s(2)U34. The polypeptide is tRNA-specific 2-thiouridylase MnmA (Paraburkholderia phymatum (strain DSM 17167 / CIP 108236 / LMG 21445 / STM815) (Burkholderia phymatum)).